The primary structure comprises 441 residues: UDP-N-acetylmuramoylalanine--D-glutamate ligase (441 aa).

113–119 serves as a coordination point for ATP; it reads GSNAKST.

It belongs to the MurCDEF family.

It is found in the cytoplasm. The enzyme catalyses UDP-N-acetyl-alpha-D-muramoyl-L-alanine + D-glutamate + ATP = UDP-N-acetyl-alpha-D-muramoyl-L-alanyl-D-glutamate + ADP + phosphate + H(+). It functions in the pathway cell wall biogenesis; peptidoglycan biosynthesis. Functionally, cell wall formation. Catalyzes the addition of glutamate to the nucleotide precursor UDP-N-acetylmuramoyl-L-alanine (UMA). The polypeptide is UDP-N-acetylmuramoylalanine--D-glutamate ligase (Alcanivorax borkumensis (strain ATCC 700651 / DSM 11573 / NCIMB 13689 / SK2)).